The primary structure comprises 194 residues: Transmembrane protein 212 (194 aa).

A run of 5 helical transmembrane segments spans residues 11–31, 44–64, 76–96, 99–119, and 148–168; these read ILVTLGILSVCSGVIAFFPVF, IACPIWNGALAITTGVLLLLA, ATFTFVILSIMGCPLHFAIAL, ALLGPYCFYSFSGIAGTNYLG, and LQALDLCLSFTLLCTSLTVFI.

The protein resides in the membrane. This Homo sapiens (Human) protein is Transmembrane protein 212 (TMEM212).